The chain runs to 72 residues: Translation initiation factor IF-1 (72 aa).

Residues 1–72 form the S1-like domain; it reads MAKDDVIEID…DKGRITFRYK (72 aa).

This sequence belongs to the IF-1 family. Component of the 30S ribosomal translation pre-initiation complex which assembles on the 30S ribosome in the order IF-2 and IF-3, IF-1 and N-formylmethionyl-tRNA(fMet); mRNA recruitment can occur at any time during PIC assembly.

The protein resides in the cytoplasm. In terms of biological role, one of the essential components for the initiation of protein synthesis. Stabilizes the binding of IF-2 and IF-3 on the 30S subunit to which N-formylmethionyl-tRNA(fMet) subsequently binds. Helps modulate mRNA selection, yielding the 30S pre-initiation complex (PIC). Upon addition of the 50S ribosomal subunit IF-1, IF-2 and IF-3 are released leaving the mature 70S translation initiation complex. This is Translation initiation factor IF-1 from Sulfurovum sp. (strain NBC37-1).